The chain runs to 102 residues: Large ribosomal subunit protein bL21 (102 aa).

This sequence belongs to the bacterial ribosomal protein bL21 family. In terms of assembly, part of the 50S ribosomal subunit. Contacts protein L20.

In terms of biological role, this protein binds to 23S rRNA in the presence of protein L20. This is Large ribosomal subunit protein bL21 from Bifidobacterium animalis subsp. lactis (strain AD011).